We begin with the raw amino-acid sequence, 384 residues long: tRNA-specific 2-thiouridylase MnmA (384 aa).

Positions 1–26 (MDEGIRASGGIRACQTGKQKQGRKRP) are disordered. ATP-binding positions include 36 to 43 (GMSGGVDS) and Met-62. Residues 122 to 124 (NPD) form an interaction with target base in tRNA region. Cys-127 (nucleophile) is an active-site residue. A disulfide bridge links Cys-127 with Cys-223. Gly-151 is a binding site for ATP. The segment at 173-175 (KDQ) is interaction with tRNA. The active-site Cysteine persulfide intermediate is the Cys-223. Positions 334–335 (RY) are interaction with tRNA.

The protein belongs to the MnmA/TRMU family.

It localises to the cytoplasm. It catalyses the reaction S-sulfanyl-L-cysteinyl-[protein] + uridine(34) in tRNA + AH2 + ATP = 2-thiouridine(34) in tRNA + L-cysteinyl-[protein] + A + AMP + diphosphate + H(+). Functionally, catalyzes the 2-thiolation of uridine at the wobble position (U34) of tRNA, leading to the formation of s(2)U34. The chain is tRNA-specific 2-thiouridylase MnmA from Chromobacterium violaceum (strain ATCC 12472 / DSM 30191 / JCM 1249 / CCUG 213 / NBRC 12614 / NCIMB 9131 / NCTC 9757 / MK).